A 177-amino-acid polypeptide reads, in one-letter code: Alpha-crystallin B chain (177 aa).

Residue Met-1 is modified to N-acetylmethionine. The sHSP domain occupies 58 to 166 (RMPSWAQTGL…PERSVPISRD (109 aa)). Zn(2+) contacts are provided by His-85, His-106, Glu-108, His-113, and His-121. Residues 155-169 (DVPERSVPISRDEKP) are compositionally biased toward basic and acidic residues. The disordered stretch occupies residues 155 to 177 (DVPERSVPISRDEKPAVAGPQQK).

Belongs to the small heat shock protein (HSP20) family. As to quaternary structure, heteromer composed of three CRYAA and one CRYAB subunits. Aggregates with homologous proteins, including the small heat shock protein HSPB1, to form large heteromeric complexes. Inter-subunit bridging via zinc ions enhances stability, which is crucial as there is no protein turn over in the lens. Interacts with HSPBAP1 and TTN/titin.

Its function is as follows. May contribute to the transparency and refractive index of the lens. The polypeptide is Alpha-crystallin B chain (CRYAB) (Squalus acanthias (Spiny dogfish)).